A 622-amino-acid chain; its full sequence is E3 ubiquitin-protein ligase hrd-1 (622 aa).

A signal peptide spans 1-23; that stretch reads MRVSAGLMIGGSCVATAATVLNA. The Lumenal segment spans residues 24-41; sequence FVINKQFYPSIVYLSKSN. The chain crosses the membrane as a helical span at residues 42–62; it reads ASMAVLYFQGIVLVYLMFQLL. Over 63 to 99 the chain is Cytoplasmic; it reads KSILFGDLRAAEAEHLSERTWHAVLETCLAFTVFRDD. A helical transmembrane segment spans residues 100–120; sequence FSAMFVMQFIGLLFIKCFHWL. Over 121–141 the chain is Lumenal; the sequence is ADDRVDMMERSPVITLRFHLR. The helical transmembrane segment at 142 to 162 threads the bilayer; the sequence is MMTVLAALGFADSYFVSSAYF. Residues 163-170 lie on the Cytoplasmic side of the membrane; that stretch reads STITKGAS. The helical transmembrane segment at 171–191 threads the bilayer; that stretch reads SQIVFGFEYAILLALVLHVTI. The Lumenal portion of the chain corresponds to 192-215; that stretch reads KYLLHMHDLRNPQSWDNKAVYLLY. A helical membrane pass occupies residues 216-236; that stretch reads AELLINLIRCVLYGFFAVIML. Over 237–622 the chain is Cytoplasmic; sequence RVHTFPLFSV…RFPPPNPEHE (386 aa). Residues 292-333 form an RING-type; atypical zinc finger; sequence CIICREEMTVESSPKRLPCSHVFHAHCLRSWFQRQQTCPTCR. Residues 436-445 are compositionally biased toward pro residues; it reads MPPPPIPQPN. Disordered regions lie at residues 436–463 and 514–622; these read MPPPPIPQPNAAPGESSNAEPPGRPNFD and PVPT…PEHE. Positions 526 to 538 are enriched in low complexity; sequence ATASSVPTSVPSE. Residues 562 to 577 are compositionally biased toward polar residues; it reads FNDTQSTSTPSTSAGP. Over residues 579–596 the composition is skewed to low complexity; it reads PSLTPSTSSVPSTSSVRT.

It belongs to the HRD1 family. As to quaternary structure, homodimer.

It is found in the endoplasmic reticulum membrane. The catalysed reaction is S-ubiquitinyl-[E2 ubiquitin-conjugating enzyme]-L-cysteine + [acceptor protein]-L-lysine = [E2 ubiquitin-conjugating enzyme]-L-cysteine + N(6)-ubiquitinyl-[acceptor protein]-L-lysine.. The protein operates within protein modification; protein ubiquitination. Its function is as follows. Acts as an E3 ubiquitin-protein ligase which accepts ubiquitin specifically from endoplasmic reticulum-associated ubc-7 E2 ligase and transfers it to substrates, promoting their degradation. Component of the endoplasmic reticulum quality control (ERQC) system, which is also called the ER-associated degradation (ERAD) system, involved in ubiquitin-dependent degradation of misfolded endoplasmic reticulum proteins. Also promotes the degradation of normal but naturally short-lived proteins. Protects cells from ER stress-induced apoptosis. Thought to play a role together with hsp-3 in developmental growth and function of intestinal cells and to play a role together with hsp-4 in gonad formation. This is E3 ubiquitin-protein ligase hrd-1 from Caenorhabditis briggsae.